Reading from the N-terminus, the 94-residue chain is Citrate lyase acyl carrier protein (94 aa).

Ser-14 is subject to O-(phosphoribosyl dephospho-coenzyme A)serine.

Belongs to the CitD family. In terms of assembly, oligomer with a subunit composition of (alpha,beta,gamma)6.

Its subcellular location is the cytoplasm. Its function is as follows. Covalent carrier of the coenzyme of citrate lyase. The polypeptide is Citrate lyase acyl carrier protein (Halothermothrix orenii (strain H 168 / OCM 544 / DSM 9562)).